Consider the following 218-residue polypeptide: Phosphatidylserine decarboxylase proenzyme (218 aa).

Ser182 serves as the catalytic Schiff-base intermediate with substrate; via pyruvic acid. The residue at position 182 (Ser182) is a Pyruvic acid (Ser); by autocatalysis.

The protein belongs to the phosphatidylserine decarboxylase family. PSD-A subfamily. As to quaternary structure, heterodimer of a large membrane-associated beta subunit and a small pyruvoyl-containing alpha subunit. Pyruvate is required as a cofactor. Is synthesized initially as an inactive proenzyme. Formation of the active enzyme involves a self-maturation process in which the active site pyruvoyl group is generated from an internal serine residue via an autocatalytic post-translational modification. Two non-identical subunits are generated from the proenzyme in this reaction, and the pyruvate is formed at the N-terminus of the alpha chain, which is derived from the carboxyl end of the proenzyme. The post-translation cleavage follows an unusual pathway, termed non-hydrolytic serinolysis, in which the side chain hydroxyl group of the serine supplies its oxygen atom to form the C-terminus of the beta chain, while the remainder of the serine residue undergoes an oxidative deamination to produce ammonia and the pyruvoyl prosthetic group on the alpha chain.

Its subcellular location is the cell membrane. It carries out the reaction a 1,2-diacyl-sn-glycero-3-phospho-L-serine + H(+) = a 1,2-diacyl-sn-glycero-3-phosphoethanolamine + CO2. The protein operates within phospholipid metabolism; phosphatidylethanolamine biosynthesis; phosphatidylethanolamine from CDP-diacylglycerol: step 2/2. Its function is as follows. Catalyzes the formation of phosphatidylethanolamine (PtdEtn) from phosphatidylserine (PtdSer). The protein is Phosphatidylserine decarboxylase proenzyme of Oleidesulfovibrio alaskensis (strain ATCC BAA-1058 / DSM 17464 / G20) (Desulfovibrio alaskensis).